We begin with the raw amino-acid sequence, 295 residues long: Protoheme IX farnesyltransferase 2 (295 aa).

Helical transmembrane passes span 9–29 (ITKP…FFLA), 36–56 (FALF…GCVF), 83–103 (LTLA…LLYV), 108–128 (LSAF…SLWL), 135–155 (GTLV…CAVS), 163–183 (VTLL…IAIF), 209–229 (IVLY…GGYA), 230–250 (GLGY…MAWG), and 264–284 (VFGF…VDSQ).

This sequence belongs to the UbiA prenyltransferase family. Protoheme IX farnesyltransferase subfamily.

The protein resides in the cell inner membrane. The enzyme catalyses heme b + (2E,6E)-farnesyl diphosphate + H2O = Fe(II)-heme o + diphosphate. Its pathway is porphyrin-containing compound metabolism; heme O biosynthesis; heme O from protoheme: step 1/1. In terms of biological role, converts heme B (protoheme IX) to heme O by substitution of the vinyl group on carbon 2 of heme B porphyrin ring with a hydroxyethyl farnesyl side group. The sequence is that of Protoheme IX farnesyltransferase 2 from Pseudomonas putida (strain W619).